The following is a 92-amino-acid chain: AMSDMELRQCLPCGPGGKGRCFGPSICCGEELGCFVGTAEALRCQEENYLPSPCQSGQKPCGSGGRCAAAGICCYEESCVTEPECREGAGIH.

Disulfide bonds link cysteine 10-cysteine 54, cysteine 13-cysteine 27, cysteine 21-cysteine 44, cysteine 28-cysteine 34, cysteine 61-cysteine 73, cysteine 67-cysteine 85, and cysteine 74-cysteine 79.

This sequence belongs to the vasopressin/oxytocin family. As to quaternary structure, there is an equilibrium between the monomeric and dimeric forms. On peptide binding the dimeric form predominates. A shorter neurophysin molecule (1-90) also exists and is probably derived from the complete protein by proteolytic degradation (in vivo or after extraction).

It is found in the secreted. Its function is as follows. Neurophysin 2 specifically binds vasopressin. This chain is Neurophysin 2 (AVP), found in Loxodonta africana (African elephant).